Here is a 304-residue protein sequence, read N- to C-terminus: Oxygen-dependent coproporphyrinogen-III oxidase (304 aa).

S93 is a substrate binding site. A divalent metal cation-binding residues include H97 and H107. Residue H107 is the Proton donor of the active site. N109–R111 serves as a coordination point for substrate. H146 and H176 together coordinate a divalent metal cation. The tract at residues Y241 to A276 is important for dimerization. G259–R261 lines the substrate pocket.

It belongs to the aerobic coproporphyrinogen-III oxidase family. As to quaternary structure, homodimer. The cofactor is a divalent metal cation.

It localises to the cytoplasm. The enzyme catalyses coproporphyrinogen III + O2 + 2 H(+) = protoporphyrinogen IX + 2 CO2 + 2 H2O. The protein operates within porphyrin-containing compound metabolism; protoporphyrin-IX biosynthesis; protoporphyrinogen-IX from coproporphyrinogen-III (O2 route): step 1/1. Its function is as follows. Involved in the heme biosynthesis. Catalyzes the aerobic oxidative decarboxylation of propionate groups of rings A and B of coproporphyrinogen-III to yield the vinyl groups in protoporphyrinogen-IX. The chain is Oxygen-dependent coproporphyrinogen-III oxidase from Pseudomonas fluorescens (strain Pf0-1).